The chain runs to 252 residues: Triosephosphate isomerase (252 aa).

Residue 10–12 (NWK) participates in substrate binding. His-96 functions as the Electrophile in the catalytic mechanism. Glu-168 acts as the Proton acceptor in catalysis. Substrate is bound by residues Gly-174, Ser-214, and 235 to 236 (GG).

Belongs to the triosephosphate isomerase family. As to quaternary structure, homodimer.

It localises to the cytoplasm. It catalyses the reaction D-glyceraldehyde 3-phosphate = dihydroxyacetone phosphate. It functions in the pathway carbohydrate biosynthesis; gluconeogenesis. It participates in carbohydrate degradation; glycolysis; D-glyceraldehyde 3-phosphate from glycerone phosphate: step 1/1. Functionally, involved in the gluconeogenesis. Catalyzes stereospecifically the conversion of dihydroxyacetone phosphate (DHAP) to D-glyceraldehyde-3-phosphate (G3P). The chain is Triosephosphate isomerase from Streptococcus pyogenes serotype M18 (strain MGAS8232).